The following is a 626-amino-acid chain: Biosynthetic arginine decarboxylase (626 aa).

At Lys99 the chain carries N6-(pyridoxal phosphate)lysine. Residue 279–289 participates in substrate binding; it reads VDVGGGLGVDY.

This sequence belongs to the Orn/Lys/Arg decarboxylase class-II family. SpeA subfamily. The cofactor is Mg(2+). It depends on pyridoxal 5'-phosphate as a cofactor.

The enzyme catalyses L-arginine + H(+) = agmatine + CO2. It participates in amine and polyamine biosynthesis; agmatine biosynthesis; agmatine from L-arginine: step 1/1. Functionally, catalyzes the biosynthesis of agmatine from arginine. The protein is Biosynthetic arginine decarboxylase of Chromobacterium violaceum (strain ATCC 12472 / DSM 30191 / JCM 1249 / CCUG 213 / NBRC 12614 / NCIMB 9131 / NCTC 9757 / MK).